Consider the following 842-residue polypeptide: Elongation factor 2 (842 aa).

The tr-type G domain maps to 17–346 (ANVRNMSVIA…MIVLHLPSPV (330 aa)). Residues 26 to 33 (AHVDHGKS), 158 to 161 (NKVD), and 213 to 215 (SGL) each bind GTP. Histidine 699 is subject to Diphthamide.

It belongs to the TRAFAC class translation factor GTPase superfamily. Classic translation factor GTPase family. EF-G/EF-2 subfamily.

The protein resides in the cytoplasm. The catalysed reaction is GTP + H2O = GDP + phosphate + H(+). The protein operates within protein biosynthesis; polypeptide chain elongation. In terms of biological role, catalyzes the GTP-dependent ribosomal translocation step during translation elongation. During this step, the ribosome changes from the pre-translocational (PRE) to the post-translocational (POST) state as the newly formed A-site-bound peptidyl-tRNA and P-site-bound deacylated tRNA move to the P and E sites, respectively. Catalyzes the coordinated movement of the two tRNA molecules, the mRNA and conformational changes in the ribosome. The polypeptide is Elongation factor 2 (EFT2) (Meyerozyma guilliermondii (strain ATCC 6260 / CBS 566 / DSM 6381 / JCM 1539 / NBRC 10279 / NRRL Y-324) (Yeast)).